The following is a 471-amino-acid chain: Tryptophanase (471 aa).

Lys270 carries the post-translational modification N6-(pyridoxal phosphate)lysine.

It belongs to the beta-eliminating lyase family. In terms of assembly, homotetramer. Pyridoxal 5'-phosphate is required as a cofactor.

The catalysed reaction is L-tryptophan + H2O = indole + pyruvate + NH4(+). It functions in the pathway amino-acid degradation; L-tryptophan degradation via pyruvate pathway; indole and pyruvate from L-tryptophan: step 1/1. The chain is Tryptophanase from Histophilus somni (strain 2336) (Haemophilus somnus).